Here is a 147-residue protein sequence, read N- to C-terminus: MMKLNLFINANETESYIDIHAPKMNDHVQSIINAVNDLDKSHTLVGYIDKEIHIINVSDVITFQVINKNVTAITSNQKFKLKLRLYELEKQLPQHFIRISKSEIVNKYYIEKLLLEPNGLIRMYLKDAHYTYSSRRYLKSIKERLSI.

The region spanning 44 to 147 (LVGYIDKEIH…LKSIKERLSI (104 aa)) is the HTH LytTR-type domain.

It localises to the cytoplasm. This is an uncharacterized protein from Staphylococcus aureus (strain Mu50 / ATCC 700699).